Here is a 219-residue protein sequence, read N- to C-terminus: N-(5'-phosphoribosyl)anthranilate isomerase (219 aa).

It belongs to the TrpF family.

The enzyme catalyses N-(5-phospho-beta-D-ribosyl)anthranilate = 1-(2-carboxyphenylamino)-1-deoxy-D-ribulose 5-phosphate. Its pathway is amino-acid biosynthesis; L-tryptophan biosynthesis; L-tryptophan from chorismate: step 3/5. This Bradyrhizobium sp. (strain ORS 278) protein is N-(5'-phosphoribosyl)anthranilate isomerase.